The following is a 139-amino-acid chain: Holo-[acyl-carrier-protein] synthase (139 aa).

Positions 8 and 57 each coordinate Mg(2+).

Belongs to the P-Pant transferase superfamily. AcpS family. Mg(2+) serves as cofactor.

The protein localises to the cytoplasm. It catalyses the reaction apo-[ACP] + CoA = holo-[ACP] + adenosine 3',5'-bisphosphate + H(+). Functionally, transfers the 4'-phosphopantetheine moiety from coenzyme A to a Ser of acyl-carrier-protein. This is Holo-[acyl-carrier-protein] synthase from Sinorhizobium fredii (strain NBRC 101917 / NGR234).